The sequence spans 362 residues: Alanine racemase (362 aa).

Residue Lys35 is the Proton acceptor; specific for D-alanine of the active site. An N6-(pyridoxal phosphate)lysine modification is found at Lys35. A substrate-binding site is contributed by Arg130. Tyr257 serves as the catalytic Proton acceptor; specific for L-alanine. Met305 serves as a coordination point for substrate.

Belongs to the alanine racemase family. Pyridoxal 5'-phosphate serves as cofactor.

It carries out the reaction L-alanine = D-alanine. The protein operates within amino-acid biosynthesis; D-alanine biosynthesis; D-alanine from L-alanine: step 1/1. In terms of biological role, catalyzes the interconversion of L-alanine and D-alanine. May also act on other amino acids. The polypeptide is Alanine racemase (alr) (Nitrosomonas europaea (strain ATCC 19718 / CIP 103999 / KCTC 2705 / NBRC 14298)).